Here is a 525-residue protein sequence, read N- to C-terminus: MSFDKLLQALPPPLPLPAILIATFIFFFSCWILHQSQRNERLPPGPYPWPIIGNFHQVRLPLHRTLKNLAEKYGPILFLRFGSVPTVVVSSSEKAKHFLKTHDLIFASRPPTSVGKYFFYNFKDIAFSPYGDHWRKMRKICVLELLTSKRIESFKHVRQEELSAMIHSIWEESESGRIAVNVSKAISTSLANILWRILARKKFSDNDLGADGKGFADLVVEVSIAVGSLNIGDFIPYLDCLDLQGIKRALKKANARFDAFAEKMIDEHINASTIRNGEADAGCHVKDIIDVLLEMAKNDNTGAKVTREIIKAITYELFSAGMETSANVLEWAMSELLRHPHAMKKLQQEIESVVGQQGTVKESDLASIVYLHCVVKETLRLYPSLPLALPHESLEAVTVGGYYIPKKTMVIMNLWAIGRDPSVWGADASEFKPERFMQMEENGIDLSGGQSDFRMLPFGAGRRTCPGSAMAILTVEFTLAQLLHTFDWRVEGDPSELDMKEACATKMPRQTPLLAYPRLRLPRCP.

The chain crosses the membrane as a helical span at residues 13 to 33; the sequence is PLPLPAILIATFIFFFSCWIL. C465 serves as a coordination point for heme.

The protein belongs to the cytochrome P450 family. Heme serves as cofactor.

Its subcellular location is the membrane. The chain is Cytochrome P450 750A1 (CYP750A1) from Pinus taeda (Loblolly pine).